Here is a 254-residue protein sequence, read N- to C-terminus: Phosphoribosylaminoimidazole-succinocarboxamide synthase (254 aa).

This sequence belongs to the SAICAR synthetase family.

It carries out the reaction 5-amino-1-(5-phospho-D-ribosyl)imidazole-4-carboxylate + L-aspartate + ATP = (2S)-2-[5-amino-1-(5-phospho-beta-D-ribosyl)imidazole-4-carboxamido]succinate + ADP + phosphate + 2 H(+). It functions in the pathway purine metabolism; IMP biosynthesis via de novo pathway; 5-amino-1-(5-phospho-D-ribosyl)imidazole-4-carboxamide from 5-amino-1-(5-phospho-D-ribosyl)imidazole-4-carboxylate: step 1/2. In Brucella melitensis biotype 2 (strain ATCC 23457), this protein is Phosphoribosylaminoimidazole-succinocarboxamide synthase.